The sequence spans 333 residues: Lipoyl synthase (333 aa).

Residues C55, C60, C66, C81, C85, C88, and S292 each contribute to the [4Fe-4S] cluster site. The region spanning 67–281 is the Radical SAM core domain; sequence WEDREATFLI…SAEAERLGFA (215 aa).

Belongs to the radical SAM superfamily. Lipoyl synthase family. Requires [4Fe-4S] cluster as cofactor.

It localises to the cytoplasm. The enzyme catalyses [[Fe-S] cluster scaffold protein carrying a second [4Fe-4S](2+) cluster] + N(6)-octanoyl-L-lysyl-[protein] + 2 oxidized [2Fe-2S]-[ferredoxin] + 2 S-adenosyl-L-methionine + 4 H(+) = [[Fe-S] cluster scaffold protein] + N(6)-[(R)-dihydrolipoyl]-L-lysyl-[protein] + 4 Fe(3+) + 2 hydrogen sulfide + 2 5'-deoxyadenosine + 2 L-methionine + 2 reduced [2Fe-2S]-[ferredoxin]. It functions in the pathway protein modification; protein lipoylation via endogenous pathway; protein N(6)-(lipoyl)lysine from octanoyl-[acyl-carrier-protein]: step 2/2. Its function is as follows. Catalyzes the radical-mediated insertion of two sulfur atoms into the C-6 and C-8 positions of the octanoyl moiety bound to the lipoyl domains of lipoate-dependent enzymes, thereby converting the octanoylated domains into lipoylated derivatives. The protein is Lipoyl synthase of Kineococcus radiotolerans (strain ATCC BAA-149 / DSM 14245 / SRS30216).